Reading from the N-terminus, the 70-residue chain is Dermaseptin-H3 (70 aa).

The N-terminal stretch at 1–22 (MAFLKKSLFLVLFLGMVSLSIC) is a signal peptide. The propeptide occupies 23–43 (EEEKRENEDEELQEDDEQSEM). The interval 25 to 44 (EKRENEDEELQEDDEQSEMK) is disordered. A compositionally biased stretch (acidic residues) spans 30–40 (EDEELQEDDEQ). Leu70 bears the Leucine amide mark.

In terms of tissue distribution, expressed by the skin glands.

Its subcellular location is the secreted. Functionally, has antibacterial activity against the Gram-negative bacteria E.coli and P.aeruginosa, and the Gram-positive bacteria S.aureus and M.luteus. Has antiprotozoal activity against L.amazonensis. No hemolytic activity. The polypeptide is Dermaseptin-H3 (Pithecopus hypochondrialis (Orange-legged leaf frog)).